A 455-amino-acid chain; its full sequence is Adenylyltransferase and sulfurtransferase MOCS3 (455 aa).

ATP contacts are provided by residues glycine 90, aspartate 111, 118–122 (SNLAR), lysine 135, and 179–180 (DN). Residues 156–236 (AQALTPATAL…QPPPAETVTN (81 aa)) form an interaction with NFS1 region. Residues cysteine 220 and cysteine 223 each coordinate Zn(2+). Cysteine 237 acts as the Glycyl thioester intermediate; for adenylyltransferase activity in catalysis. The Zn(2+) site is built by cysteine 295 and cysteine 298. A disulfide bridge connects residues cysteine 314 and cysteine 322. One can recognise a Rhodanese domain in the interval 345-453 (SGSPHLLLDV…WAAKVDGTFP (109 aa)). Cysteine 410 functions as the Cysteine persulfide intermediate; for sulfurtransferase activity in the catalytic mechanism. A Cysteine persulfide modification is found at cysteine 410.

The protein in the N-terminal section; belongs to the HesA/MoeB/ThiF family. UBA4 subfamily. In terms of assembly, interacts with NFS1. The cofactor is Zn(2+).

The protein localises to the cytoplasm. It is found in the cytosol. It carries out the reaction [molybdopterin-synthase sulfur-carrier protein]-C-terminal Gly-Gly + ATP + H(+) = [molybdopterin-synthase sulfur-carrier protein]-C-terminal Gly-Gly-AMP + diphosphate. The enzyme catalyses [molybdopterin-synthase sulfur-carrier protein]-C-terminal Gly-Gly-AMP + S-sulfanyl-L-cysteinyl-[cysteine desulfurase] + AH2 = [molybdopterin-synthase sulfur-carrier protein]-C-terminal-Gly-aminoethanethioate + L-cysteinyl-[cysteine desulfurase] + A + AMP + 2 H(+). It functions in the pathway tRNA modification; 5-methoxycarbonylmethyl-2-thiouridine-tRNA biosynthesis. The protein operates within cofactor biosynthesis; molybdopterin biosynthesis. Functionally, plays a central role in 2-thiolation of mcm(5)S(2)U at tRNA wobble positions of cytosolic tRNA(Lys), tRNA(Glu) and tRNA(Gln). Also essential during biosynthesis of the molybdenum cofactor. Acts by mediating the C-terminal thiocarboxylation of sulfur carriers URM1 and MOCS2A. Its N-terminus first activates URM1 and MOCS2A as acyl-adenylates (-COAMP), then the persulfide sulfur on the catalytic cysteine is transferred to URM1 and MOCS2A to form thiocarboxylation (-COSH) of their C-terminus. The reaction probably involves hydrogen sulfide that is generated from the persulfide intermediate and that acts as a nucleophile towards URM1 and MOCS2A. Subsequently, a transient disulfide bond is formed. Does not use thiosulfate as sulfur donor; NFS1 acting as a sulfur donor for thiocarboxylation reactions. The polypeptide is Adenylyltransferase and sulfurtransferase MOCS3 (Sus scrofa (Pig)).